The following is a 180-amino-acid chain: Hypoxanthine-guanine phosphoribosyltransferase (180 aa).

Residues Lys43 and Gly44 each coordinate diphosphate. Positions 99 and 100 each coordinate Mg(2+). Asp103 functions as the Proton acceptor in the catalytic mechanism. GMP contacts are provided by residues Lys131, 152-153, and Asp159; that span reads FI. Position 165 (Arg165) interacts with diphosphate.

This sequence belongs to the purine/pyrimidine phosphoribosyltransferase family. It depends on Mg(2+) as a cofactor.

It localises to the cytoplasm. It catalyses the reaction IMP + diphosphate = hypoxanthine + 5-phospho-alpha-D-ribose 1-diphosphate. The catalysed reaction is GMP + diphosphate = guanine + 5-phospho-alpha-D-ribose 1-diphosphate. It participates in purine metabolism; IMP biosynthesis via salvage pathway; IMP from hypoxanthine: step 1/1. The protein operates within purine metabolism; GMP biosynthesis via salvage pathway; GMP from guanine: step 1/1. Its function is as follows. Purine salvage pathway enzyme that catalyzes the transfer of the ribosyl-5-phosphate group from 5-phospho-alpha-D-ribose 1-diphosphate (PRPP) to the N9 position of the 6-oxopurines hypoxanthine and guanine to form the corresponding ribonucleotides IMP (inosine 5'-monophosphate) and GMP (guanosine 5'-monophosphate), with the release of PPi. The sequence is that of Hypoxanthine-guanine phosphoribosyltransferase (hpt) from Streptococcus agalactiae serotype III (strain NEM316).